The sequence spans 334 residues: Myo-inositol 2-dehydrogenase (334 aa).

This sequence belongs to the Gfo/Idh/MocA family.

The enzyme catalyses myo-inositol + NAD(+) = scyllo-inosose + NADH + H(+). Its pathway is polyol metabolism; myo-inositol metabolism. Functionally, catalyzes the NAD(+)-dependent oxidation of myo-inositol (MI) to 2-keto-myo-inositol (scyllo-inosose), and thus probably functions in a myo-inositol degradation pathway together with IolM, IolN and IolO. Has no activity with scyllo-inositol and much reduced activity (78-fold lower catalytic efficiency) with 1D-chiro-inositol. The chain is Myo-inositol 2-dehydrogenase from Thermotoga maritima (strain ATCC 43589 / DSM 3109 / JCM 10099 / NBRC 100826 / MSB8).